A 1182-amino-acid polypeptide reads, in one-letter code: MEAMSPQQDALGAQPGRSSSLTGMSRIAGGPGTKKKMKTLAERRRSAPSLILDKALQKRPSTRDSHSASIDTCAFLSSFMCSSRTLLIDGPVELKRGLQRQERHLFLFNDLFVSAKIKYNNNFKIKNKIRLTDMWTASCVEEVGEGNMNAQKSFVLGWPTVNFVATFSSPEQKDKWLSLLQRYIALEKEKDYPKSIPLKIFAKDIGNCAYFKTITVMNSDTASEVINMSLQMLGITGSERDYQLWVNSGKEAAPYPLIGHEYPYGIKMSHLRDTALLTQGSRDSASPSQLQEPFLMEQLPREMQCQFILKPTRLATAQQLSDSSQKTFKRRRSIINWAFWRGSSTHLDNLPMSPTSPMPGQLFGVSLPDLCENDNLPKPILDMLSFLNQKGPLTKGIFRQSANMKSCRELKEKLNSGIEVHLDCESIFVIASVLKDFLRNIPESIFSSDLYDHWVCVMDQGNDEEKINIIQRLLDQLPRANVVFLRYLFGVLHNIEQHSLSNQMTAFNLAVCIAPSILWPPASSSPELENEFTKKVSLLIQFLIENCCRVFGEEIASLLGELSERSDREHTPDITCFQMNDSSYDSLENELNEEADAPCSDLVKKLGQGSRSMDSVLTLSDYDLEQPEVEGLLTLSNFDLDQSKEEHIPIKPPLEPKPVNVFVGYRKVSLGEHARAPAGPGTLSCLPVAAADAPKVLRRHRRSSEPSIDYLDTKLSYLREFYQKKLRKSSCDAVLSRKDEDYLKQTQPQKKGDKVCLKQSSVTGTDVSKRNTANENIKKKSLSGHEGTQVTLFTKSKPVPISVASYSHGSSQDHPRKQAFDADPCRFSPPHLTDAQKSSRVQHRRCSEPSIDDQNYKLSYLRGIYSMKQNKASCEAGLLHGEDDYLRRHKSLQIEGQKLINQSLVMGIEVGKSSSSHQSTEKVLPPRLNLCPRASYSSLSSPGSSPSGSSVSSQDSAFSQISEHSVFTPTETSSPIDCTFQTQRKQEELSSDFDSPSRLSGMPGPSMGQASSHLAYLRKGTTEQPSQMHSVTLHPSAWLRSGLVTLKNWSLKKKTKAARPEDRKVCSLKEPLELPSCASGTPEADSLQESQDDLQGDEGPGQTACGFSSYACQDSEQHAGSPFHLAESRLKPCMKLYKGEESGGQYPCDNPWEGASSSLETTEDTANPGAEPTTFAMTGTDI.

A disordered region spans residues 1-40 (MEAMSPQQDALGAQPGRSSSLTGMSRIAGGPGTKKKMKTL). Serine 46 carries the post-translational modification Phosphoserine. One can recognise a PH domain in the interval 85–185 (TLLIDGPVEL…WLSLLQRYIA (101 aa)). Residues 194–283 (KSIPLKIFAK…TALLTQGSRD (90 aa)) enclose the Ras-associating domain. Residues 365-551 (VSLPDLCEND…FLIENCCRVF (187 aa)) enclose the Rho-GAP domain. Residues serine 704 and serine 730 each carry the phosphoserine modification. 6 disordered regions span residues 745–772 (QTQPQKKGDKVCLKQSSVTGTDVSKRNT), 803–839 (VASYSHGSSQDHPRKQAFDADPCRFSPPHLTDAQKSS), 935–955 (SYSSLSSPGSSPSGSSVSSQD), 982–1011 (TQRKQEELSSDFDSPSRLSGMPGPSMGQAS), 1074–1101 (LPSCASGTPEADSLQESQDDLQGDEGPG), and 1142–1182 (SGGQ…GTDI). A compositionally biased stretch (polar residues) spans 758 to 772 (KQSSVTGTDVSKRNT). Residues 811–824 (SQDHPRKQAFDADP) show a composition bias toward basic and acidic residues.

Its function is as follows. GTPase activator for the Rho-type GTPases by converting them to an inactive GDP-bound state. The sequence is that of Rho GTPase-activating protein 20 (Arhgap20) from Mus musculus (Mouse).